A 743-amino-acid polypeptide reads, in one-letter code: DEAD-box ATP-dependent RNA helicase 3B, chloroplastic (743 aa).

Residues 1-37 (MASLTLPALALALSNPGAVRLRAAAFRCWALRRRGWA) constitute a chloroplast transit peptide. Residues 60–79 (GSDDEDGEGPYGSDADEGFE) are disordered. Acidic residues predominate over residues 61–79 (SDDEDGEGPYGSDADEGFE). The Q motif signature appears at 88-116 (LAIARLGLPDELVATLEKRGITHLFPIQR). Positions 119 to 295 (LIPALEGRDL…RRYLNNPLTI (177 aa)) constitute a Helicase ATP-binding domain. Residue 132–139 (AKTGTGKT) participates in ATP binding. A DEAD box motif is present at residues 243–246 (DEAD). The region spanning 324 to 469 (VLSDLITVYA…ISPPSIEEVL (146 aa)) is the Helicase C-terminal domain. The disordered stretch occupies residues 606-719 (LTKISKLPAL…RSSSFGGRES (114 aa)). The segment covering 642–653 (GGGASRGRGGWD) has biased composition (gly residues). Residues 657–671 (EDRFRRGGRSLRSDN) show a composition bias toward basic and acidic residues. Residues 688-719 (RSSSFGSRSSSYSSRGSPSFGGRSSSFGGRES) show a composition bias toward low complexity. Residues 725–742 (GACFNCGESGHRATDCPN) form a CCHC-type zinc finger.

Belongs to the DEAD box helicase family. DDX21/DDX50 subfamily.

The protein localises to the plastid. It is found in the chloroplast stroma. The catalysed reaction is ATP + H2O = ADP + phosphate + H(+). Nuclear genome-encoded factor involved in ribosome biogenesis in chloroplasts. Binds specific group II introns in chloroplasts and facilitates their splicing. Is required for rRNA maturation in plastids and may contribute to the assembly of the large (50S) ribosomal subunit. Required for normal development of chloroplasts. The chain is DEAD-box ATP-dependent RNA helicase 3B, chloroplastic from Zea mays (Maize).